Consider the following 875-residue polypeptide: ATP-dependent helicase Lhr-Core (875 aa).

ATP is bound by residues glutamine 35, lysine 58, threonine 59, aspartate 173, glutamate 174, isoleucine 355, arginine 372, and histidine 375. One can recognise a Helicase ATP-binding domain in the interval 39–230; the sequence is IPLIKQNYNV…FLVGKDREYR (192 aa). The DEIH box motif lies at 173–176; it reads DEIH. One can recognise a Helicase C-terminal domain in the interval 247 to 419; it reads PVKDLVHSSE…SIHIPKNPLD (173 aa). The WH domain stretch occupies residues 420–506; sequence VLSQIIVSAS…IFYTNSGTIP (87 aa). The interval 507 to 875 is domain 4; the sequence is DEAMISVVTE…VNIELEYTSV (369 aa).

Belongs to the Lhr helicase family. Lhr-Core subfamily. Monomer and homodimer. The monomeric form has helicase, ATPase and strand annealing activities, while the dimeric form only has ATPAse and strand annealing activities. Interacts with DNA topoisomerase 3 (topA).

It catalyses the reaction Couples ATP hydrolysis with the unwinding of duplex DNA by translocating in the 3'-5' direction.. It carries out the reaction ATP + H2O = ADP + phosphate + H(+). DNA topoisomerase 3 (topA) inhibits helicase activity on Holliday junctions (HJ) but has no effect on ATPase activity. In terms of biological role, DNA helicase that translocates in a 3'-5' direction on single-stranded (ss)DNA, probably involved in DNA repair. Unwinds DNA in a 3'-5' direction, unwinding is ATP-dependent, acts preferentially on fork and 3'-tailed DNA; bubble and blunt-ended double-stranded (ds)DNA are not substrates. Has winding and unwinding activity, unwinds Holliday junction (HJ) DNA in the presence of ATP, the main product is forked DNA, single-stranded binding protein (SSB) does not stimulate activity. Anneals complementary oligonucleotides in an ATP-independent manner to form HJ and fork structures, thus can perform strand exchange. Preferentially binds HJ, forked and ssDNA, dsDNA is bound less well. LhrC-Core (Hel112) inhibits the exonuclease activity of the HerA-NurA complex on ss- and dsDNA, has no effect on ssDNA nicking by NurA; HerA-NurA are involved in DNA end-resection during DNA double-strand break repair. The sequence is that of ATP-dependent helicase Lhr-Core from Saccharolobus solfataricus (strain ATCC 35092 / DSM 1617 / JCM 11322 / P2) (Sulfolobus solfataricus).